A 1026-amino-acid chain; its full sequence is Multidrug resistance protein MdtC (1026 aa).

Residues M1–L6 are Cytoplasmic-facing. The helical transmembrane segment at F7–F29 threads the bilayer. At R30–E335 the chain is on the periplasmic side. The helical transmembrane segment at E336–L353 threads the bilayer. Residues R354 to T359 are Cytoplasmic-facing. A helical membrane pass occupies residues L360–L379. Topologically, residues C380–S388 are periplasmic. Residues L389–A411 traverse the membrane as a helical segment. The Cytoplasmic portion of the chain corresponds to R412–E430. The chain crosses the membrane as a helical span at residues V431 to G453. Residues G454 to L467 are Periplasmic-facing. The chain crosses the membrane as a helical span at residues S468–L490. Over K491–Q852 the chain is Cytoplasmic. A helical membrane pass occupies residues L853–V875. At H876 to A894 the chain is on the periplasmic side. Residues L895–V917 form a helical membrane-spanning segment. Over K918–C947 the chain is Cytoplasmic. The chain crosses the membrane as a helical span at residues L948–L970. Over S971 to I984 the chain is Periplasmic. The helical transmembrane segment at T985–F1007 threads the bilayer. At F1008 to I1026 the chain is on the cytoplasmic side.

It belongs to the resistance-nodulation-cell division (RND) (TC 2.A.6) family. MdtC subfamily. In terms of assembly, part of a tripartite efflux system composed of MdtA, MdtB and MdtC. MdtC forms a heteromultimer with MdtB.

The protein resides in the cell inner membrane. This Salmonella typhi protein is Multidrug resistance protein MdtC.